The chain runs to 117 residues: Non-specific lipid-transfer protein (117 aa).

A signal peptide spans 1–26; the sequence is MASSAVIKLACAVLLCIVVAAPYAEA. 4 disulfides stabilise this stretch: cysteine 30–cysteine 76, cysteine 40–cysteine 53, cysteine 54–cysteine 99, and cysteine 74–cysteine 113.

This sequence belongs to the plant LTP family.

In terms of biological role, plant non-specific lipid-transfer proteins transfer phospholipids as well as galactolipids across membranes. May play a role in wax or cutin deposition in the cell walls of expanding epidermal cells and certain secretory tissues. In Spinacia oleracea (Spinach), this protein is Non-specific lipid-transfer protein.